The following is a 578-amino-acid chain: DNA mismatch repair protein MutL (578 aa).

Belongs to the DNA mismatch repair MutL/HexB family.

This protein is involved in the repair of mismatches in DNA. It is required for dam-dependent methyl-directed DNA mismatch repair. May act as a 'molecular matchmaker', a protein that promotes the formation of a stable complex between two or more DNA-binding proteins in an ATP-dependent manner without itself being part of a final effector complex. This chain is DNA mismatch repair protein MutL, found in Carboxydothermus hydrogenoformans (strain ATCC BAA-161 / DSM 6008 / Z-2901).